The primary structure comprises 85 residues: Double gene block protein 2 (85 aa).

Over 1–2 the chain is Lumenal; sequence MK. Residues 3–23 traverse the membrane as a helical segment; that stretch reads VLLVTGVLGLLLLIKWKSQST. At 24 to 36 the chain is on the cytoplasmic side; it reads STSNQTCQCPTSP. The chain crosses the membrane as a helical span at residues 37–56; it reads WVIYAFYNSLSLVLLLCHLI. Over 57–85 the chain is Lumenal; that stretch reads PEIKPIHTSYNTHDSSKQQHISINTGNGK.

Belongs to the carmovirus double gene block protein 2 family.

The protein resides in the host endoplasmic reticulum membrane. Cell-to-cell movement function. This Turnip crinkle virus (TCV) protein is Double gene block protein 2.